Here is a 182-residue protein sequence, read N- to C-terminus: Large ribosomal subunit protein bL25 (182 aa).

This sequence belongs to the bacterial ribosomal protein bL25 family. CTC subfamily. Part of the 50S ribosomal subunit; part of the 5S rRNA/L5/L18/L25 subcomplex. Contacts the 5S rRNA. Binds to the 5S rRNA independently of L5 and L18.

This is one of the proteins that binds to the 5S RNA in the ribosome where it forms part of the central protuberance. This is Large ribosomal subunit protein bL25 from Borrelia garinii subsp. bavariensis (strain ATCC BAA-2496 / DSM 23469 / PBi) (Borreliella bavariensis).